Consider the following 101-residue polypeptide: Small ribosomal subunit protein bS18c (101 aa).

It belongs to the bacterial ribosomal protein bS18 family. As to quaternary structure, part of the 30S ribosomal subunit.

Its subcellular location is the plastid. It localises to the chloroplast. The chain is Small ribosomal subunit protein bS18c from Guizotia abyssinica (Niger).